The following is a 216-amino-acid chain: Transmembrane emp24 domain-containing protein eca (216 aa).

The signal sequence occupies residues 1–20 (MRDQFICLALLLCALHSACG). At 21–182 (LYFHISETER…FRHTSESTNS (162 aa)) the chain is on the lumenal side. The region spanning 30 to 126 (RKCFIEEVPD…QLRVHLDIQV (97 aa)) is the GOLD domain. Residues 134-164 (ANVAQKEKLTELQLRIRQLLDQVEQITKEQN) are a coiled coil. Residues 183–203 (RVLWWSLAQTLVLVCMGFWQM) form a helical membrane-spanning segment. The Cytoplasmic segment spans residues 204-216 (RHLKSFFEAKKLV). The short motif at 213–216 (KKLV) is the Prevents secretion from ER element.

It belongs to the EMP24/GP25L family.

It localises to the endoplasmic reticulum membrane. Eca and bai are essential, though not redundant, for dorsoventral patterning of the embryo. Specifically required during early embryogenesis for the activity of maternal tkv, while the zygotic tkv is not affected. Involved in Golgi organization. The protein is Transmembrane emp24 domain-containing protein eca of Drosophila pseudoobscura pseudoobscura (Fruit fly).